The primary structure comprises 440 residues: Kinetochore protein NUF2 homolog (440 aa).

2 coiled-coil regions span residues 142–239 (LGLL…LRSQ) and 299–386 (INEQ…RQTN).

The protein belongs to the NUF2 family. As to quaternary structure, component of the NDC80 complex, which consists of NDC80, NUF2, SPC24 and SPC25.

Its subcellular location is the chromosome. It localises to the centromere. Acts as a component of the essential kinetochore-associated NDC80 complex, which is required for chromosome segregation and spindle checkpoint activity to ensure proper cell division. In Arabidopsis thaliana (Mouse-ear cress), this protein is Kinetochore protein NUF2 homolog.